Reading from the N-terminus, the 500-residue chain is Trehalose-6-phosphate synthase (500 aa).

Position 28 (arginine 28) interacts with D-glucose 6-phosphate. 48–49 (GG) is a UDP-alpha-D-glucose binding site. Residues tyrosine 108 and aspartate 162 each coordinate D-glucose 6-phosphate. Residues arginine 304 and lysine 309 each coordinate UDP-alpha-D-glucose. Position 342 (arginine 342) interacts with D-glucose 6-phosphate. Residue 407 to 411 (LVAKE) participates in UDP-alpha-D-glucose binding.

Belongs to the glycosyltransferase 20 family. In terms of assembly, homotetramer.

The enzyme catalyses ADP-alpha-D-glucose + D-glucose 6-phosphate = alpha,alpha-trehalose 6-phosphate + ADP + H(+). The catalysed reaction is CDP-alpha-D-glucose + D-glucose 6-phosphate = alpha,alpha-trehalose 6-phosphate + CDP + H(+). It carries out the reaction GDP-alpha-D-glucose + D-glucose 6-phosphate = alpha,alpha-trehalose 6-phosphate + GDP + H(+). It catalyses the reaction TDP-alpha-D-glucose + D-glucose 6-phosphate = 5-methyl-UDP + alpha,alpha-trehalose 6-phosphate + H(+). The enzyme catalyses D-glucose 6-phosphate + UDP-alpha-D-glucose = alpha,alpha-trehalose 6-phosphate + UDP + H(+). Its pathway is glycan biosynthesis; trehalose biosynthesis. In terms of biological role, probably involved in the osmoprotection via the biosynthesis of trehalose and in the production of glycogen and alpha-glucan via the TreS-Pep2 branch involved in the biosynthesis of maltose-1-phosphate (M1P). Catalyzes the transfer of glucose from UDP-glucose (UDP-Glc) to D-glucose 6-phosphate (Glc-6-P) to form trehalose-6-phosphate. Probably also able to use ADP-Glc, CDP-Glc, GDP-Glc and TDP-Glc as glucosyl donors. The chain is Trehalose-6-phosphate synthase from Mycobacterium tuberculosis (strain CDC 1551 / Oshkosh).